Here is an 878-residue protein sequence, read N- to C-terminus: DNA mismatch repair protein MutS (878 aa).

629–636 lines the ATP pocket; it reads GPNMAGKS.

This sequence belongs to the DNA mismatch repair MutS family.

Functionally, this protein is involved in the repair of mismatches in DNA. It is possible that it carries out the mismatch recognition step. This protein has a weak ATPase activity. This chain is DNA mismatch repair protein MutS, found in Roseobacter denitrificans (strain ATCC 33942 / OCh 114) (Erythrobacter sp. (strain OCh 114)).